Consider the following 175-residue polypeptide: Adenine phosphoribosyltransferase (175 aa).

It belongs to the purine/pyrimidine phosphoribosyltransferase family. Homodimer.

Its subcellular location is the cytoplasm. It carries out the reaction AMP + diphosphate = 5-phospho-alpha-D-ribose 1-diphosphate + adenine. The protein operates within purine metabolism; AMP biosynthesis via salvage pathway; AMP from adenine: step 1/1. In terms of biological role, catalyzes a salvage reaction resulting in the formation of AMP, that is energically less costly than de novo synthesis. This is Adenine phosphoribosyltransferase from Lactobacillus gasseri (strain ATCC 33323 / DSM 20243 / BCRC 14619 / CIP 102991 / JCM 1131 / KCTC 3163 / NCIMB 11718 / NCTC 13722 / AM63).